The primary structure comprises 622 residues: Chaperone protein HscA homolog (622 aa).

The protein belongs to the heat shock protein 70 family.

Functionally, chaperone involved in the maturation of iron-sulfur cluster-containing proteins. Has a low intrinsic ATPase activity which is markedly stimulated by HscB. This is Chaperone protein HscA homolog from Pseudoalteromonas atlantica (strain T6c / ATCC BAA-1087).